A 626-amino-acid polypeptide reads, in one-letter code: Janus kinase and microtubule-interacting protein 1 (626 aa).

Positions Met1 to Val365 are mediates association with microtubules. Coiled-coil stretches lie at residues Val19–Glu254 and Glu284–Ser413. The mediates interaction with TYK2 and GABBR1 stretch occupies residues Val365 to Met626. Ser382 is modified (phosphoserine). The segment covering Glu452 to Thr461 has biased composition (polar residues). A disordered region spans residues Glu452 to Thr480. Thr470 is modified (phosphothreonine). The stretch at Gln490–Arg604 forms a coiled coil.

The protein belongs to the JAKMIP family. In terms of assembly, homodimer. Forms a complex with GABBR1 and KIF5B/kinesin-1. Interacts with JAK1 and TYK2. Post-translationally, phosphorylated.

Its subcellular location is the cytoplasm. It localises to the cytoskeleton. The protein localises to the membrane. Functionally, associates with microtubules and may play a role in the microtubule-dependent transport of the GABA-B receptor. May play a role in JAK1 signaling and regulate microtubule cytoskeleton rearrangements. This is Janus kinase and microtubule-interacting protein 1 (JAKMIP1) from Bos taurus (Bovine).